Reading from the N-terminus, the 464-residue chain is MSLQFSNGSRHVCLRSGAGSVRPLNGGAGFAGSSACGGSVAGSEFSCALGGGLGSVPGGSHAGGALGNAACIGFAGSEGGLLSGNEKVTMQNLNDRLASYLDNVRALEEANAELERKIKGWYEKYGPGSCRGLDHDYSRYHLTIEDLKNKIISSTTTNANVILQIDNARLAADDFRLKYENELTLHQNVEADINGLRRVLDELTLCRTDQELQYESLSEEMTYLKKNHEEEMKALQCAAGGNVNVEMNAAPGVDLAVLLNNMRAEYEALAEQNRKDAEAWFNEKSASLQQQISHDSGAATFARSQLTEMRRTLQTLEIQLQSLMATKHSLECSLTETESNYCTQLAQIQAQIGALEEQLHQVRTETEGQKLEYEHLLDVKVHLEKEIETYCRLIDGDGNSCSKSKGFGSGSPGNSSKDLSKTTLVKTVVEELDQRGKVLSSRIHSIEEKTSKMTNGKTEQRVPF.

Positions 1 to 85 (MSLQFSNGSR…GSEGGLLSGN (85 aa)) are head. Residues 86–121 (EKVTMQNLNDRLASYLDNVRALEEANAELERKIKGW) form a coil 1A region. Residues 86–401 (EKVTMQNLND…RLIDGDGNSC (316 aa)) form the IF rod domain. A linker 1 region spans residues 122 to 143 (YEKYGPGSCRGLDHDYSRYHLT). Residues 144-235 (IEDLKNKIIS…KNHEEEMKAL (92 aa)) are coil 1B. Residues 236-258 (QCAAGGNVNVEMNAAPGVDLAVL) form a linker 12 region. The segment at 259–397 (LNNMRAEYEA…ETYCRLIDGD (139 aa)) is coil 2. The segment at 398–464 (GNSCSKSKGF…NGKTEQRVPF (67 aa)) is tail. Positions 443–464 (IHSIEEKTSKMTNGKTEQRVPF) are disordered.

It belongs to the intermediate filament family. Heterotetramer of two type I and two type II keratins. As to expression, strongly expressed in skin and scalp, and weak expression observed in thymus. In the hair follicle, expressed in Henle layer, Huxley layer and in the irs cuticle. Expression extends from the bulb region up to the point of differentiation into the three layers. Also present in the medulla of beard hair (at protein level).

It localises to the cytoplasm. Functionally, essential for the proper assembly of types I and II keratin protein complexes and the formation of keratin intermediate filaments in the inner root sheath (irs). The chain is Keratin, type I cytoskeletal 28 from Homo sapiens (Human).